A 511-amino-acid polypeptide reads, in one-letter code: Maturase K (511 aa).

It belongs to the intron maturase 2 family. MatK subfamily.

The protein localises to the plastid. It localises to the chloroplast. Usually encoded in the trnK tRNA gene intron. Probably assists in splicing its own and other chloroplast group II introns. The polypeptide is Maturase K (Oryza nivara (Indian wild rice)).